The following is a 307-amino-acid chain: UDP-N-acetylenolpyruvoylglucosamine reductase (307 aa).

Residues 33-197 (TGGNADFYIT…LEAAFTLAPG (165 aa)) form the FAD-binding PCMH-type domain. Arginine 176 is an active-site residue. Serine 226 (proton donor) is an active-site residue. The active site involves glutamate 296.

Belongs to the MurB family. The cofactor is FAD.

It localises to the cytoplasm. It catalyses the reaction UDP-N-acetyl-alpha-D-muramate + NADP(+) = UDP-N-acetyl-3-O-(1-carboxyvinyl)-alpha-D-glucosamine + NADPH + H(+). Its pathway is cell wall biogenesis; peptidoglycan biosynthesis. Functionally, cell wall formation. This is UDP-N-acetylenolpyruvoylglucosamine reductase from Staphylococcus aureus (strain Mu3 / ATCC 700698).